A 105-amino-acid polypeptide reads, in one-letter code: Large ribosomal subunit protein uL24 (105 aa).

It belongs to the universal ribosomal protein uL24 family. As to quaternary structure, part of the 50S ribosomal subunit.

One of two assembly initiator proteins, it binds directly to the 5'-end of the 23S rRNA, where it nucleates assembly of the 50S subunit. Its function is as follows. One of the proteins that surrounds the polypeptide exit tunnel on the outside of the subunit. The chain is Large ribosomal subunit protein uL24 from Nitrosospira multiformis (strain ATCC 25196 / NCIMB 11849 / C 71).